Consider the following 631-residue polypeptide: Probable G-protein coupled receptor 153 (631 aa).

Residues 1-11 (MSDERRLPSSA) are Extracellular-facing. Residues 12–32 (VGWLACGGLSLLANAWGILSV) form a helical membrane-spanning segment. The Cytoplasmic segment spans residues 33-41 (GAKQKKWKP). The helical transmembrane segment at 42-62 (LEFLLCTLAATHMLNVAVPIA) threads the bilayer. Over 63–84 (TYAVVQLRRQRPDYEWNEGLCK) the chain is Extracellular. Residues 85–105 (VFVSTFYTLTLATCFSVTSIS) form a helical membrane-spanning segment. The Cytoplasmic portion of the chain corresponds to 106 to 126 (YHRMWMVRWPVNYRLSNAKKQ). Residues 127 to 147 (AVHTVMGIWMVSFILSALPAV) traverse the membrane as a helical segment. Over 148–162 (GWHDTSERFYTHGCR) the chain is Extracellular. The helical transmembrane segment at 163-183 (FIVAEIGLGFGVCFLLLVGGS) threads the bilayer. Over 184-243 (VAMGMVCTAIALFQTLATQVGHRADRRTFTVPTIVVEDAQGKRRSSIDGSEPARTSLQIT) the chain is Cytoplasmic. The helical transmembrane segment at 244 to 264 (GLVATIVVIYDCLMGFPVLVV) threads the bilayer. The Extracellular portion of the chain corresponds to 265 to 276 (SFSSLRADASAP). Residues 277–297 (WMALCVLWCSVTQALLLPLFL) form a helical membrane-spanning segment. Topologically, residues 298–631 (WTCDRYRADL…LHSDSLGSAS (334 aa)) are cytoplasmic. Disordered stretches follow at residues 486 to 518 (LQPSSLDGGPRHAQDSPPGSPRRRPGPGARSAS), 546 to 590 (QPFP…SLSA), and 603 to 631 (CGSISSFLSSPSESSGYVTLHSDSLGSAS). The span at 605–617 (SISSFLSSPSESS) shows a compositional bias: low complexity.

This sequence belongs to the G-protein coupled receptor 1 family.

It localises to the cell membrane. Its function is as follows. Orphan receptor. This Mus musculus (Mouse) protein is Probable G-protein coupled receptor 153 (Gpr153).